The following is a 719-amino-acid chain: Photosystem I P700 chlorophyll a apoprotein A1 (719 aa).

The next 8 membrane-spanning stretches (helical) occupy residues 60–83, 146–169, 185–209, 281–299, 336–359, 375–401, 423–445, and 521–539; these read IFSAHFGQLSIIFIWLSGMYFHGA, LYCTAIGALIFAGLMLFAGWFHYH, LNHHLAGLLGLGSLGWAGHQVHVSL, TAHHHIAIAVLFLIAGHMY, WHAQLAVNLAMLGSLTIIVAHHMY, LSLFTHHMWIGGFLVVGAAAHAAIFMV, AIISHLNWVCIFLGFHSFGLYIH, and FLVHHIHAFTIHVTVLILL. [4Fe-4S] cluster-binding residues include Cys-563 and Cys-572. Helical transmembrane passes span 579–600 and 654–676; these read HVFLGLFWMYNSISVVIFHFSW and LSAYGLLFLGAHFVWAFSLMFLF. His-665 contributes to the chlorophyll a' binding site. Chlorophyll a is bound by residues Met-673 and Tyr-681. Trp-682 is a binding site for phylloquinone. A helical transmembrane segment spans residues 714-719; sequence AVGVAH.

It belongs to the PsaA/PsaB family. As to quaternary structure, the PsaA/B heterodimer binds the P700 chlorophyll special pair and subsequent electron acceptors. PSI consists of a core antenna complex that captures photons, and an electron transfer chain that converts photonic excitation into a charge separation. The eukaryotic PSI reaction center is composed of at least 11 subunits. Requires P700 is a chlorophyll a/chlorophyll a' dimer, A0 is one or more chlorophyll a, A1 is one or both phylloquinones and FX is a shared 4Fe-4S iron-sulfur center. as cofactor.

It localises to the plastid. The protein localises to the chloroplast thylakoid membrane. The enzyme catalyses reduced [plastocyanin] + hnu + oxidized [2Fe-2S]-[ferredoxin] = oxidized [plastocyanin] + reduced [2Fe-2S]-[ferredoxin]. In terms of biological role, psaA and PsaB bind P700, the primary electron donor of photosystem I (PSI), as well as the electron acceptors A0, A1 and FX. PSI is a plastocyanin-ferredoxin oxidoreductase, converting photonic excitation into a charge separation, which transfers an electron from the donor P700 chlorophyll pair to the spectroscopically characterized acceptors A0, A1, FX, FA and FB in turn. Oxidized P700 is reduced on the lumenal side of the thylakoid membrane by plastocyanin. In Equisetum palustre (Marsh horsetail), this protein is Photosystem I P700 chlorophyll a apoprotein A1.